Consider the following 231-residue polypeptide: 7-cyano-7-deazaguanine synthase (231 aa).

8-18 (FSGGQDSTTCL) lines the ATP pocket. Residues Cys-188, Cys-197, Cys-200, and Cys-203 each coordinate Zn(2+).

The protein belongs to the QueC family. The cofactor is Zn(2+).

The enzyme catalyses 7-carboxy-7-deazaguanine + NH4(+) + ATP = 7-cyano-7-deazaguanine + ADP + phosphate + H2O + H(+). It participates in purine metabolism; 7-cyano-7-deazaguanine biosynthesis. Catalyzes the ATP-dependent conversion of 7-carboxy-7-deazaguanine (CDG) to 7-cyano-7-deazaguanine (preQ(0)). This Enterobacter sp. (strain 638) protein is 7-cyano-7-deazaguanine synthase.